The following is a 226-amino-acid chain: Ribosomal RNA small subunit methyltransferase Nep1 (226 aa).

Residues G176, G181, and 197–202 (IYEESL) each bind S-adenosyl-L-methionine.

Belongs to the class IV-like SAM-binding methyltransferase superfamily. RNA methyltransferase NEP1 family. Homodimer.

It catalyses the reaction a pseudouridine in rRNA + S-adenosyl-L-methionine = an N(1)-methylpseudouridine in rRNA + S-adenosyl-L-homocysteine + H(+). Functionally, methyltransferase involved in ribosomal biogenesis. Specifically catalyzes the N1-methylation of the pseudouridine corresponding to position 914 in M.jannaschii 16S rRNA. This Methanothrix thermoacetophila (strain DSM 6194 / JCM 14653 / NBRC 101360 / PT) (Methanosaeta thermophila) protein is Ribosomal RNA small subunit methyltransferase Nep1.